A 210-amino-acid chain; its full sequence is Menaquinone reductase, multiheme cytochrome c subunit (210 aa).

A helical membrane pass occupies residues 20–40 (GGAAPFFVGLVVALVFGWWAF). Heme is bound by residues Cys67, Cys70, His71, Cys88, Cys91, His92, Cys140, Cys143, His144, Cys152, Cys155, His156, Cys186, Cys189, His190, Cys205, Cys208, and His209.

Belongs to the multiheme cytochrome c family. In terms of assembly, the Qrc complex is composed of four subunits: QrcA, QrcB, QrcC and QrcD. Can form a supercomplex with the [NiFe] hydrogenase HynA1 and the tetraheme Type I cytochrome c3 TpIc(3), its physiological electron donors. It depends on heme c as a cofactor.

It is found in the cell inner membrane. Its function is as follows. Component of the respiratory Qrc complex, that catalyzes the reduction of the menaquinone pool using electrons transferred from the reduced periplasmic cytochrome c3, and which is probably involved in sulfate respiration. Is likely essential for growth on H(2) or formate since the periplasmic hydrogenases and/or formate dehydrogenases act as primary electron donors for the Qrc complex. The polypeptide is Menaquinone reductase, multiheme cytochrome c subunit (Nitratidesulfovibrio vulgaris (strain ATCC 29579 / DSM 644 / CCUG 34227 / NCIMB 8303 / VKM B-1760 / Hildenborough) (Desulfovibrio vulgaris)).